The primary structure comprises 341 residues: MKPIILQGHERSLNQIVFNSEGDLLFSASKDSVVNAWYTSNGERLGTYGGIKGGDGHNGSVWTVAVDSQTRFLLTGGADNAMKLWEVKTGECLYTWEFLTAVKRVAWNEDDDMFLSITEQRSGQPSVIRIFSINREDPRSQSTTPITEMRLSGSRATVAIWAPLSDYIITGHESGKIAKYDVKTGEEVQAVEDEHSALISDIQLSPDGTYFITASKDKTARLWDIETLEVMKVYTTETPVNSAVITPDRPYIILGGGQDAMNVTTTSQRAGKFESRFFHKLFEEEVGRVKGHFGPINTLSVHPQGRAYASGAEDGFVRVHWFEESYFRSRPFGDLEPEPEV.

6 WD repeats span residues glycine 8–threonine 47, glycine 56–threonine 95, leucine 151–alanine 190, glutamate 194–valine 233, threonine 235–glutamate 274, and glycine 291–proline 331.

The protein belongs to the eIF-3 subunit I family. Component of the eukaryotic translation initiation factor 3 (eIF-3) complex.

Its subcellular location is the cytoplasm. Functionally, component of the eukaryotic translation initiation factor 3 (eIF-3) complex, which is involved in protein synthesis of a specialized repertoire of mRNAs and, together with other initiation factors, stimulates binding of mRNA and methionyl-tRNAi to the 40S ribosome. The eIF-3 complex specifically targets and initiates translation of a subset of mRNAs involved in cell proliferation. The protein is Eukaryotic translation initiation factor 3 subunit I of Cryptococcus neoformans var. neoformans serotype D (strain B-3501A) (Filobasidiella neoformans).